The primary structure comprises 126 residues: Thioredoxin H-type 1 (126 aa).

The 119-residue stretch at 2-120 (AANDATSSEE…LQQTIVKHAA (119 aa)) folds into the Thioredoxin domain. Catalysis depends on nucleophile residues Cys46 and Cys49. A disulfide bridge connects residues Cys46 and Cys49.

It belongs to the thioredoxin family. Plant H-type subfamily.

The protein localises to the cytoplasm. In terms of biological role, participates in various redox reactions through the reversible oxidation of the active center dithiol to a disulfide. The H form is known to activate a number of cytosolic enzymes. The polypeptide is Thioredoxin H-type 1 (Nicotiana tabacum (Common tobacco)).